The sequence spans 436 residues: UPF0597 protein YhaM (436 aa).

It belongs to the UPF0597 family.

The polypeptide is UPF0597 protein YhaM (Salmonella paratyphi B (strain ATCC BAA-1250 / SPB7)).